Here is a 421-residue protein sequence, read N- to C-terminus: Probable sugar-binding periplasmic protein (421 aa).

A signal peptide spans 1-27 (MHKLLKLAAMGTAACALLAGMAPVANA).

This sequence belongs to the bacterial solute-binding protein 1 family.

It is found in the periplasm. In terms of biological role, part of a binding-protein-dependent transport system for a sugar. This chain is Probable sugar-binding periplasmic protein, found in Brucella suis biovar 1 (strain 1330).